A 777-amino-acid polypeptide reads, in one-letter code: DNA repair helicase/translocase XPB-R (777 aa).

In terms of domain architecture, Helicase ATP-binding spans 212 to 416; sequence AASDGALRSG…DLFHLVGPKL (205 aa). 225–232 contacts ATP; sequence LPCGSGKT. Positions 369 to 372 match the DEVH box motif; it reads DEVH. A Helicase C-terminal domain is found at 484 to 631; it reads IVKRHVAESS…GYTCSVTEFN (148 aa).

The protein belongs to the helicase family. RAD25/XPB subfamily.

It carries out the reaction Couples ATP hydrolysis with the unwinding of duplex DNA by translocating in the 3'-5' direction.. The enzyme catalyses ATP + H2O = ADP + phosphate + H(+). In terms of biological role, ATP-dependent 3'-5' DNA helicase/translocase; binds dsDNA rather than ssDNA, unzipping it in a translocase rather than classical helicase activity. Involved in nucleotide excision repair (NER) of damaged DNA. XPB-R is a paralog of XBP, but is not a component of the TFIIH basal transcription factor and is dispensable for RNA polymerase II transcription. The protein is DNA repair helicase/translocase XPB-R of Trypanosoma brucei brucei (strain 927/4 GUTat10.1).